The chain runs to 389 residues: Flavin-dependent monooxygenase (389 aa).

Residues 12–15, 34–35, glutamine 44, arginine 105, tyrosine 267, and aspartate 289 contribute to the FAD site; these read AGVA and EK.

It belongs to the aromatic-ring hydroxylase family. Requires FAD as cofactor.

The enzyme catalyses a tetracycline + NADPH + O2 + H(+) = a (1S,10aS)-3-(CONH2)-1-(Me2N)-3,3a,4,6-(HO)4-2,5-dioxo-1H,10aH,11H,11aH-cyclopenta[b]anthracene + CO + NADP(+) + H2O. It carries out the reaction 7-chlorotetracycline + NADPH + O2 + H(+) = (1S,10S,10aS)-3-(CONH2)-9-Cl-1-(Me2N)-3,3a,4,10-(HO)4-10-Me-2,5-dioxo-1H,10aH,11H,11aH-cyclopenta[b]anthracen-6-olate + CO + NADP(+) + H2O. With respect to regulation, inhibited by anhydrotetracycline. Functionally, an FAD-requiring monooxygenase active on tetracycline antibiotic and some of its derivatives, which leads to their inactivation. Expression in E.coli confers high resistance to tetracycline and oxytetracycline, does not confer resistance to minocycline or tigecycline. The reaction requires NADPH. Expression in L.pneumophila confers resistance to tetracycline. Degrades and confers resistance to tetracycline and chlortetracycline. The sequence is that of Flavin-dependent monooxygenase (tet(56)) from Legionella longbeachae serogroup 1 (strain NSW150).